Reading from the N-terminus, the 417-residue chain is UDP-N-acetylglucosamine 1-carboxyvinyltransferase (417 aa).

Lys-22–Asn-23 serves as a coordination point for phosphoenolpyruvate. Residue Arg-93 coordinates UDP-N-acetyl-alpha-D-glucosamine. Cys-117 (proton donor) is an active-site residue. A 2-(S-cysteinyl)pyruvic acid O-phosphothioketal modification is found at Cys-117. Residues Arg-122–Gln-126, Asp-305, and Ile-327 contribute to the UDP-N-acetyl-alpha-D-glucosamine site.

This sequence belongs to the EPSP synthase family. MurA subfamily.

The protein localises to the cytoplasm. It catalyses the reaction phosphoenolpyruvate + UDP-N-acetyl-alpha-D-glucosamine = UDP-N-acetyl-3-O-(1-carboxyvinyl)-alpha-D-glucosamine + phosphate. The protein operates within cell wall biogenesis; peptidoglycan biosynthesis. In terms of biological role, cell wall formation. Adds enolpyruvyl to UDP-N-acetylglucosamine. The polypeptide is UDP-N-acetylglucosamine 1-carboxyvinyltransferase (Dechloromonas aromatica (strain RCB)).